The primary structure comprises 309 residues: Ribonuclease Z (309 aa).

7 residues coordinate Zn(2+): H63, H65, D67, H68, H143, D213, and H271. D67 serves as the catalytic Proton acceptor.

The protein belongs to the RNase Z family. Homodimer. It depends on Zn(2+) as a cofactor.

It carries out the reaction Endonucleolytic cleavage of RNA, removing extra 3' nucleotides from tRNA precursor, generating 3' termini of tRNAs. A 3'-hydroxy group is left at the tRNA terminus and a 5'-phosphoryl group is left at the trailer molecule.. Zinc phosphodiesterase, which displays some tRNA 3'-processing endonuclease activity. Probably involved in tRNA maturation, by removing a 3'-trailer from precursor tRNA. This chain is Ribonuclease Z, found in Phocaeicola vulgatus (strain ATCC 8482 / DSM 1447 / JCM 5826 / CCUG 4940 / NBRC 14291 / NCTC 11154) (Bacteroides vulgatus).